The following is a 253-amino-acid chain: 5'-nucleotidase SurE (253 aa).

A divalent metal cation is bound by residues D8, D9, S39, and N92.

Belongs to the SurE nucleotidase family. It depends on a divalent metal cation as a cofactor.

It is found in the cytoplasm. The enzyme catalyses a ribonucleoside 5'-phosphate + H2O = a ribonucleoside + phosphate. Its function is as follows. Nucleotidase that shows phosphatase activity on nucleoside 5'-monophosphates. This chain is 5'-nucleotidase SurE, found in Burkholderia pseudomallei (strain 1710b).